A 124-amino-acid chain; its full sequence is Small ribosomal subunit protein uS13 (124 aa).

Residues 98–124 (VRGQRTKTNARTRKGPKRTIAGKKKAR) form a disordered region.

Belongs to the universal ribosomal protein uS13 family. In terms of assembly, part of the 30S ribosomal subunit. Forms a loose heterodimer with protein S19. Forms two bridges to the 50S subunit in the 70S ribosome.

In terms of biological role, located at the top of the head of the 30S subunit, it contacts several helices of the 16S rRNA. In the 70S ribosome it contacts the 23S rRNA (bridge B1a) and protein L5 of the 50S subunit (bridge B1b), connecting the 2 subunits; these bridges are implicated in subunit movement. Contacts the tRNAs in the A and P-sites. The polypeptide is Small ribosomal subunit protein uS13 (Mycobacterium leprae (strain Br4923)).